A 128-amino-acid polypeptide reads, in one-letter code: Ribosome-binding factor A (128 aa).

It belongs to the RbfA family. As to quaternary structure, monomer. Binds 30S ribosomal subunits, but not 50S ribosomal subunits or 70S ribosomes.

The protein resides in the cytoplasm. Functionally, one of several proteins that assist in the late maturation steps of the functional core of the 30S ribosomal subunit. Associates with free 30S ribosomal subunits (but not with 30S subunits that are part of 70S ribosomes or polysomes). Required for efficient processing of 16S rRNA. May interact with the 5'-terminal helix region of 16S rRNA. This is Ribosome-binding factor A from Acidithiobacillus ferrooxidans (strain ATCC 23270 / DSM 14882 / CIP 104768 / NCIMB 8455) (Ferrobacillus ferrooxidans (strain ATCC 23270)).